The primary structure comprises 226 residues: ATP synthase F(0) complex subunit a (226 aa).

6 consecutive transmembrane segments (helical) span residues 6-26 (FASF…IIMF), 68-88 (WSLM…LGLL), 97-117 (QLSM…ITGF), 138-158 (IPML…ALAV), 164-184 (ITAG…LTSI), and 189-209 (AILT…VALI).

The protein belongs to the ATPase A chain family. Component of the ATP synthase complex composed at least of ATP5F1A/subunit alpha, ATP5F1B/subunit beta, ATP5MC1/subunit c (homooctomer), MT-ATP6/subunit a, MT-ATP8/subunit 8, ATP5ME/subunit e, ATP5MF/subunit f, ATP5MG/subunit g, ATP5MK/subunit k, ATP5MJ/subunit j, ATP5F1C/subunit gamma, ATP5F1D/subunit delta, ATP5F1E/subunit epsilon, ATP5PF/subunit F6, ATP5PB/subunit b, ATP5PD/subunit d, ATP5PO/subunit OSCP. ATP synthase complex consists of a soluble F(1) head domain (subunits alpha(3) and beta(3)) - the catalytic core - and a membrane F(0) domain - the membrane proton channel (subunits c, a, 8, e, f, g, k and j). These two domains are linked by a central stalk (subunits gamma, delta, and epsilon) rotating inside the F1 region and a stationary peripheral stalk (subunits F6, b, d, and OSCP). Interacts with DNAJC30; interaction is direct.

Its subcellular location is the mitochondrion inner membrane. The enzyme catalyses H(+)(in) = H(+)(out). Functionally, subunit a, of the mitochondrial membrane ATP synthase complex (F(1)F(0) ATP synthase or Complex V) that produces ATP from ADP in the presence of a proton gradient across the membrane which is generated by electron transport complexes of the respiratory chain. ATP synthase complex consist of a soluble F(1) head domain - the catalytic core - and a membrane F(1) domain - the membrane proton channel. These two domains are linked by a central stalk rotating inside the F(1) region and a stationary peripheral stalk. During catalysis, ATP synthesis in the catalytic domain of F(1) is coupled via a rotary mechanism of the central stalk subunits to proton translocation. With the subunit c (ATP5MC1), forms the proton-conducting channel in the F(0) domain, that contains two crucial half-channels (inlet and outlet) that facilitate proton movement from the mitochondrial intermembrane space (IMS) into the matrix. Protons are taken up via the inlet half-channel and released through the outlet half-channel, following a Grotthuss mechanism. The polypeptide is ATP synthase F(0) complex subunit a (Ictidomys tridecemlineatus (Thirteen-lined ground squirrel)).